The primary structure comprises 198 residues: Ribonuclease HII (198 aa).

One can recognise an RNase H type-2 domain in the interval 10–198; it reads HLVAGVDEVG…PVKRALGLVS (189 aa). A divalent metal cation contacts are provided by aspartate 16, glutamate 17, and aspartate 108.

It belongs to the RNase HII family. Requires Mn(2+) as cofactor. Mg(2+) is required as a cofactor.

Its subcellular location is the cytoplasm. The catalysed reaction is Endonucleolytic cleavage to 5'-phosphomonoester.. In terms of biological role, endonuclease that specifically degrades the RNA of RNA-DNA hybrids. The chain is Ribonuclease HII from Salmonella schwarzengrund (strain CVM19633).